We begin with the raw amino-acid sequence, 201 residues long: Small ribosomal subunit protein uS4c (201 aa).

The region spanning 89–150 is the S4 RNA-binding domain; it reads MRLDNILFRL…KQRSKVLIQN (62 aa).

Belongs to the universal ribosomal protein uS4 family. As to quaternary structure, part of the 30S ribosomal subunit. Contacts protein S5. The interaction surface between S4 and S5 is involved in control of translational fidelity.

It localises to the plastid. It is found in the chloroplast. One of the primary rRNA binding proteins, it binds directly to 16S rRNA where it nucleates assembly of the body of the 30S subunit. In terms of biological role, with S5 and S12 plays an important role in translational accuracy. The chain is Small ribosomal subunit protein uS4c (rps4) from Dioscorea elephantipes (Elephant's foot yam).